The primary structure comprises 227 residues: Lipoprotein-releasing system ATP-binding protein LolD (227 aa).

Residues 6-227 (LKIEGLRKTY…HLEDGVLVER (222 aa)) enclose the ABC transporter domain. Residue 43–50 (APSGAGKS) participates in ATP binding.

This sequence belongs to the ABC transporter superfamily. Lipoprotein translocase (TC 3.A.1.125) family. The complex is composed of two ATP-binding proteins (LolD) and two transmembrane proteins (LolC and LolE).

The protein localises to the cell inner membrane. Part of the ABC transporter complex LolCDE involved in the translocation of mature outer membrane-directed lipoproteins, from the inner membrane to the periplasmic chaperone, LolA. Responsible for the formation of the LolA-lipoprotein complex in an ATP-dependent manner. This chain is Lipoprotein-releasing system ATP-binding protein LolD, found in Ruegeria sp. (strain TM1040) (Silicibacter sp.).